Here is a 185-residue protein sequence, read N- to C-terminus: Ribosome-recycling factor (185 aa).

This sequence belongs to the RRF family.

It localises to the cytoplasm. Responsible for the release of ribosomes from messenger RNA at the termination of protein biosynthesis. May increase the efficiency of translation by recycling ribosomes from one round of translation to another. The polypeptide is Ribosome-recycling factor (Thioalkalivibrio sulfidiphilus (strain HL-EbGR7)).